The primary structure comprises 415 residues: Prostacyclin receptor (415 aa).

The interval 1–21 (MMASDGHPGPPSVTPGSPLSA) is disordered. Residues 1-44 (MMASDGHPGPPSVTPGSPLSAGGREWQGMAGSCWNITYVQDSVG) are Extracellular-facing. 2 cysteine pairs are disulfide-bonded: C33-C193 and C120-C198. A glycan (N-linked (GlcNAc...) asparagine) is linked at N35. The chain crosses the membrane as a helical span at residues 45–66 (PATSTLMFVAGVVGNGLALGIL). Over 67–79 (GARRRSHPSAFAV) the chain is Cytoplasmic. A helical transmembrane segment spans residues 80–104 (LVTGLAVTDLLGTCFLSPAVFVAYA). The Extracellular portion of the chain corresponds to 105–122 (RNSSLLGLAHGGTMLCDT). Residues 123-143 (FAFAMTFFGLASTLILFAMAV) form a helical membrane-spanning segment. Topologically, residues 144-162 (ERCLALSHPYLYAQLDGPR) are cytoplasmic. The chain crosses the membrane as a helical span at residues 163–186 (CARFALPSIYAFCCLFCSLPLLGL). The Extracellular portion of the chain corresponds to 187–215 (GEHQQYCPGSWCFIRMRSAQPGGCAFSLA). A helical membrane pass occupies residues 216 to 236 (YASLMALLVTSIFFCNGSVTL). At 237-263 (SLYHMYRQQRRHHGSFVPTSRAREDEV) the chain is on the cytoplasmic side. A helical transmembrane segment spans residues 264-288 (YHLILLALMTVIMAVCSLPLMIRGF). Residues 289 to 301 (TQAIAPDSREMGD) lie on the Extracellular side of the membrane. The helical transmembrane segment at 302–322 (LLAFRFNAFNPILDPWVFILF) threads the bilayer. Over 323–415 (RKAVFQRLKF…SEAIAACSLC (93 aa)) the chain is Cytoplasmic. The tract at residues 349–370 (PLSRPASGRRDPPAPTSLQAKE) is disordered. S365 is subject to Phosphoserine. C412 carries the post-translational modification Cysteine methyl ester. Residue C412 is the site of S-farnesyl cysteine attachment. Residues 413-415 (SLC) constitute a propeptide, removed in mature form.

The protein belongs to the G-protein coupled receptor 1 family. As to quaternary structure, interacts (non-isoprenylated C-terminus) with PDZK1. In terms of processing, isoprenylation does not influence ligand binding but is required for efficient coupling to the effectors adenylyl cyclase and phospholipase C.

The protein resides in the cell membrane. Receptor for prostacyclin (prostaglandin I2 or PGI2). The activity of this receptor is mediated by G(s) proteins which activate adenylate cyclase. The sequence is that of Prostacyclin receptor (Ptgir) from Mus musculus (Mouse).